We begin with the raw amino-acid sequence, 688 residues long: Elongation factor G (688 aa).

The tr-type G domain occupies 8–282 (DKFRNFGIMA…GVVDYLPSPL (275 aa)). Residues 17–24 (AHIDAGKT), 81–85 (DTPGH), and 135–138 (NKMD) each bind GTP.

This sequence belongs to the TRAFAC class translation factor GTPase superfamily. Classic translation factor GTPase family. EF-G/EF-2 subfamily.

Its subcellular location is the cytoplasm. Its function is as follows. Catalyzes the GTP-dependent ribosomal translocation step during translation elongation. During this step, the ribosome changes from the pre-translocational (PRE) to the post-translocational (POST) state as the newly formed A-site-bound peptidyl-tRNA and P-site-bound deacylated tRNA move to the P and E sites, respectively. Catalyzes the coordinated movement of the two tRNA molecules, the mRNA and conformational changes in the ribosome. The chain is Elongation factor G from Clostridium botulinum (strain Eklund 17B / Type B).